The sequence spans 254 residues: Dihydroorotate dehydrogenase B (NAD(+)), electron transfer subunit (254 aa).

Residues 1–99 (MLQTEMKVIQ…LGPLGKGFDI (99 aa)) enclose the FAD-binding FR-type domain. Residues 50-53 (RPIS), 67-69 (LYR), and 74-75 (GT) each bind FAD. [2Fe-2S] cluster-binding residues include Cys-218, Cys-223, Cys-226, and Cys-241.

Belongs to the PyrK family. As to quaternary structure, heterotetramer of 2 PyrK and 2 PyrD type B subunits. [2Fe-2S] cluster serves as cofactor. The cofactor is FAD.

The protein operates within pyrimidine metabolism; UMP biosynthesis via de novo pathway; orotate from (S)-dihydroorotate (NAD(+) route): step 1/1. In terms of biological role, responsible for channeling the electrons from the oxidation of dihydroorotate from the FMN redox center in the PyrD type B subunit to the ultimate electron acceptor NAD(+). The chain is Dihydroorotate dehydrogenase B (NAD(+)), electron transfer subunit from Listeria monocytogenes serotype 4a (strain HCC23).